The following is a 394-amino-acid chain: Formate-dependent phosphoribosylglycinamide formyltransferase (394 aa).

Residues 21–22 and Glu81 each bind N(1)-(5-phospho-beta-D-ribosyl)glycinamide; that span reads EL. Residues Arg113, Lys154, 159-164, 194-197, and Glu202 contribute to the ATP site; these read SSGKGQ and EEFI. One can recognise an ATP-grasp domain in the interval 118-307; sequence RLAAEELGLP…QFELHVRAIL (190 aa). The Mg(2+) site is built by Glu266 and Glu278. Residues Asp285, Lys355, and 362–363 contribute to the N(1)-(5-phospho-beta-D-ribosyl)glycinamide site; that span reads RR.

The protein belongs to the PurK/PurT family. As to quaternary structure, homodimer.

It carries out the reaction N(1)-(5-phospho-beta-D-ribosyl)glycinamide + formate + ATP = N(2)-formyl-N(1)-(5-phospho-beta-D-ribosyl)glycinamide + ADP + phosphate + H(+). The protein operates within purine metabolism; IMP biosynthesis via de novo pathway; N(2)-formyl-N(1)-(5-phospho-D-ribosyl)glycinamide from N(1)-(5-phospho-D-ribosyl)glycinamide (formate route): step 1/1. Its function is as follows. Involved in the de novo purine biosynthesis. Catalyzes the transfer of formate to 5-phospho-ribosyl-glycinamide (GAR), producing 5-phospho-ribosyl-N-formylglycinamide (FGAR). Formate is provided by PurU via hydrolysis of 10-formyl-tetrahydrofolate. The protein is Formate-dependent phosphoribosylglycinamide formyltransferase of Pelobacter propionicus (strain DSM 2379 / NBRC 103807 / OttBd1).